The primary structure comprises 341 residues: uncharacterized protein (341 aa).

This is an uncharacterized protein from Mycobacterium bovis (strain ATCC BAA-935 / AF2122/97).